Consider the following 536-residue polypeptide: MAKIIKFNEEARKKLENGVDVLSNTVKVTLGPKGRNVVIEKSYGSPLITNDGVTIAKEIELEDPFENMGAQLIKEVATKANDVAGDGTTTATVLAQAMVKEGLKMITAGSNPVFVKRGIEKATKKAVSILETKSKKIAGNSEIAQVASISAGDEEIGNLIAKAMEKVGENGVITVEEAKSLETTLEVVEGMQFDKGYISSYLVTDPERMTAELDDPYILITDKKISNMKEILPVLEATARSSRPLLIIAEDIEGDVLTTLVVNKLRGTLNVVGVKAPYFGDKRIGALEDIAILTSSQVISKDKGMELEKVDISSLGSAKKVKVTKDNTLIIGGIGKEKDITSRISQIKTQISSTTSEYEKDSLKERLAKLSGGVAVIKVGSATETELKEKKLRIEDALNATKAAIEEGIVSGGGTVLIEILKEMESFELSGEERIGVNIVKKALTAPLKQIAENAGLEGSIVVEKVKNAESGIGFDAAKEEYVDMIKSGIIDPAKVTRSALQNSASVAALVLTTEAIIVDKPKKEESDTPNMPMMM.

ATP-binding positions include 29 to 32 (TLGP), 86 to 90 (DGTTT), Gly413, 476 to 478 (DAA), and Asp492.

It belongs to the chaperonin (HSP60) family. As to quaternary structure, forms a cylinder of 14 subunits composed of two heptameric rings stacked back-to-back. Interacts with the co-chaperonin GroES.

It localises to the cytoplasm. It carries out the reaction ATP + H2O + a folded polypeptide = ADP + phosphate + an unfolded polypeptide.. In terms of biological role, together with its co-chaperonin GroES, plays an essential role in assisting protein folding. The GroEL-GroES system forms a nano-cage that allows encapsulation of the non-native substrate proteins and provides a physical environment optimized to promote and accelerate protein folding. The chain is Chaperonin GroEL from Methanococcus vannielii (strain ATCC 35089 / DSM 1224 / JCM 13029 / OCM 148 / SB).